The following is a 298-amino-acid chain: Probable 2-(5''-triphosphoribosyl)-3'-dephosphocoenzyme-A synthase 2 (298 aa).

It belongs to the CitG/MdcB family.

It catalyses the reaction 3'-dephospho-CoA + ATP = 2'-(5''-triphospho-alpha-D-ribosyl)-3'-dephospho-CoA + adenine. The sequence is that of Probable 2-(5''-triphosphoribosyl)-3'-dephosphocoenzyme-A synthase 2 from Salmonella typhi.